Reading from the N-terminus, the 196-residue chain is Glycerol-3-phosphate acyltransferase (196 aa).

Transmembrane regions (helical) follow at residues 5–25 (GLIAFAFGYLLGSIPFGMILT), 70–90 (VVIALLLSGPGAAMAATLGAF), 111–131 (IGVLLGLFWPAALAFCAIWLL), and 152–172 (LLLWGFGHPQFALLFAVLTVL).

It belongs to the PlsY family. In terms of assembly, probably interacts with PlsX.

The protein localises to the cell inner membrane. The catalysed reaction is an acyl phosphate + sn-glycerol 3-phosphate = a 1-acyl-sn-glycero-3-phosphate + phosphate. Its pathway is lipid metabolism; phospholipid metabolism. In terms of biological role, catalyzes the transfer of an acyl group from acyl-phosphate (acyl-PO(4)) to glycerol-3-phosphate (G3P) to form lysophosphatidic acid (LPA). This enzyme utilizes acyl-phosphate as fatty acyl donor, but not acyl-CoA or acyl-ACP. The sequence is that of Glycerol-3-phosphate acyltransferase from Nitrobacter winogradskyi (strain ATCC 25391 / DSM 10237 / CIP 104748 / NCIMB 11846 / Nb-255).